We begin with the raw amino-acid sequence, 708 residues long: MSRIIMLIPLDKDIGLTSIGLSIIYFFYQKKIKKKSVQSILYFSCTQNSSNSTSHVINKYFSKIVHTVDYIDFSKVLFNSPEYSFLLNKVIDEHYNNKFLRELILIEGIKNNYCINSEEMNYDISQNLNAEVIFIANLENSSPEYIKNKEKKINFFLKQKKYKNILGVIFNQINSPFLENKYDFIKKLIVLKKIKNETKTIVPKKILKNNFFSIIACIPWNRNIVTTRVIDLFNFLNIQHTNLVQKKNHIIEEIIIFDTHHLNLLNKHSLNTLVIVSFSRVDVFLNVLNCNVNRSKVKCIILTGILKLKKNIASLYKFLIKRSISIFFTEKNTIEILSQLQNFNFDISVKDITYIKKLQRYISNFFCHSSFMFFKKKYNINVIYPPKEFCYNLKLLSQKKNKRIKLPESYEIRILKSVAICSDSNIAQCVLLGDPKKIYSIANDNGINLKKNIEIIDPISVRQEYLARFLEIRKGKNINEFSAKKQLEDNTVLATLILESNHVDGLVSGSINTTSDTIRPALQIIKTNPQSLLVSSIFFMLLPNQVLIYGDCAININPTAEELAVIAIQSADSAKMFGIEPRIAMLSYSTGCSGFGCQVEKVKEATSIIKNRRSDLIIDGPIQYDAAVSNKVAKLKAPSSPISGSANVFIFPDLNSGNIAYKAVQRSSRIVSIGPMLQGLRKPVNDLSRGASVEDIIYTIALTSIQSE.

Residues 388–708 (EFCYNLKLLS…TIALTSIQSE (321 aa)) form a phosphate acetyltransferase region.

The protein in the N-terminal section; belongs to the CobB/CobQ family. It in the C-terminal section; belongs to the phosphate acetyltransferase and butyryltransferase family. As to quaternary structure, homohexamer.

The protein localises to the cytoplasm. It catalyses the reaction acetyl-CoA + phosphate = acetyl phosphate + CoA. The protein operates within metabolic intermediate biosynthesis; acetyl-CoA biosynthesis; acetyl-CoA from acetate: step 2/2. In terms of biological role, involved in acetate metabolism. In Buchnera aphidicola subsp. Acyrthosiphon pisum (strain APS) (Acyrthosiphon pisum symbiotic bacterium), this protein is Phosphate acetyltransferase (pta).